We begin with the raw amino-acid sequence, 400 residues long: MTDFRTLDDAGPLQGKRVLLRVDLNVPMEGGRVTDATRIERVVPTIREIAEAGGRVILLAHFGRPKGKPEPKDSLKPILPTLSEKLGRPVAFGEDCVGEAAAKAVAALKDGDVLLLENTRYHAGEEKNAPEFAQALAANGDLYVNEAFSAAHRAHASTEGLARLLPAYAGRLMQAELDALTKGLEAPARPVIAIVGGAKVSTKIDLLENLVAKVDMLVIGGGMANTFLHAQGKDVGKSLCEKDLAETAQRILAAAKEKNCTIILPADALVAREFKANAENETVTVDAVPSDAMILDVGASSIATIDGAIDEARTLVWNGPLGAFELTPFDTGTVAVAQHAARRTRAGQLVSVAGGGDTVAALNHAGVGEDFSYVSTAGGAFLEWLEGKELPGVEALRAKA.

Residues 23–25, R38, 61–64, R120, and R153 contribute to the substrate site; these read DLN and HFGR. Residues K203, E325, and 355-358 contribute to the ATP site; that span reads GGDT.

This sequence belongs to the phosphoglycerate kinase family. Monomer.

The protein resides in the cytoplasm. It catalyses the reaction (2R)-3-phosphoglycerate + ATP = (2R)-3-phospho-glyceroyl phosphate + ADP. The protein operates within carbohydrate degradation; glycolysis; pyruvate from D-glyceraldehyde 3-phosphate: step 2/5. The polypeptide is Phosphoglycerate kinase (Methylorubrum populi (strain ATCC BAA-705 / NCIMB 13946 / BJ001) (Methylobacterium populi)).